A 231-amino-acid chain; its full sequence is Aminodeoxyfutalosine nucleosidase (231 aa).

The active-site Proton acceptor is the Glu14. Substrate contacts are provided by residues Gly81, Val155, and 175 to 176 (ME). Asp199 serves as the catalytic Proton donor.

It belongs to the PNP/UDP phosphorylase family. In terms of assembly, homodimer.

The catalysed reaction is 6-amino-6-deoxyfutalosine + H2O = dehypoxanthine futalosine + adenine. The enzyme catalyses S-adenosyl-L-homocysteine + H2O = S-(5-deoxy-D-ribos-5-yl)-L-homocysteine + adenine. It carries out the reaction S-methyl-5'-thioadenosine + H2O = 5-(methylsulfanyl)-D-ribose + adenine. It catalyses the reaction 5'-deoxyadenosine + H2O = 5-deoxy-D-ribose + adenine. Its pathway is quinol/quinone metabolism; menaquinone biosynthesis. It functions in the pathway amino-acid biosynthesis; L-methionine biosynthesis via salvage pathway; S-methyl-5-thio-alpha-D-ribose 1-phosphate from S-methyl-5'-thioadenosine (hydrolase route): step 1/2. Catalyzes the direct conversion of aminodeoxyfutalosine (AFL) into dehypoxanthine futalosine (DHFL) and adenine via the hydrolysis of the N-glycosidic bond; this reaction seems to represent an essential step in the menaquinone biosynthesis pathway in Helicobacter species. Can also probably catalyzes the hydrolysis of 5'-methylthioadenosine (MTA) and S-adenosylhomocysteine (SAH) to adenine and the corresponding thioribose, 5'-methylthioribose and S-ribosylhomocysteine, respectively. These other activities highlight the tremendous versatility of the enzyme, which also plays key roles in S-adenosylmethionine recycling and in the biosynthesis of the quorum-sensing molecule autoinducer-2. Does not act on futalosine (FL) as substrate. This chain is Aminodeoxyfutalosine nucleosidase (mtnN), found in Helicobacter pylori (strain ATCC 700392 / 26695) (Campylobacter pylori).